A 642-amino-acid chain; its full sequence is Cysteine-rich receptor-like protein kinase 27 (642 aa).

Residues 1–24 (MASTSIMLSSFFSFFFLTFFVTYA) form the signal peptide. The Extracellular portion of the chain corresponds to 25 to 274 (QQNVTVHTIC…QGKSKDRSKT (250 aa)). Asn-27, Asn-40, Asn-44, Asn-70, Asn-145, Asn-173, and Asn-258 each carry an N-linked (GlcNAc...) asparagine glycan. Gnk2-homologous domains lie at 29-130 (TVHT…SRII) and 136-240 (PVPF…VYPF). A helical membrane pass occupies residues 275–295 (LIFAVVPIVAIILGLVFLFIY). Residues 296-642 (LKRRRKKKTL…DVSLTDLSAR (347 aa)) lie on the Cytoplasmic side of the membrane. Residues 333-620 (FSLTNKIGEG…QLPKPSQPGF (288 aa)) form the Protein kinase domain. ATP is bound by residues 339 to 347 (IGEGGFGVV) and Lys-361. Tyr-406 carries the phosphotyrosine modification. The active-site Proton acceptor is Asp-458. Ser-462 is modified (phosphoserine). Thr-498 is subject to Phosphothreonine. The residue at position 506 (Tyr-506) is a Phosphotyrosine.

It belongs to the protein kinase superfamily. Ser/Thr protein kinase family. CRK subfamily.

It localises to the membrane. The enzyme catalyses L-seryl-[protein] + ATP = O-phospho-L-seryl-[protein] + ADP + H(+). It carries out the reaction L-threonyl-[protein] + ATP = O-phospho-L-threonyl-[protein] + ADP + H(+). This is Cysteine-rich receptor-like protein kinase 27 (CRK27) from Arabidopsis thaliana (Mouse-ear cress).